The sequence spans 449 residues: Signal recognition particle protein (449 aa).

GTP-binding positions include 109–116, 191–195, and 249–252; these read GLQGGGKT, DTAGR, and SRID.

It belongs to the GTP-binding SRP family. SRP54 subfamily. Part of the signal recognition particle protein translocation system, which is composed of SRP and FtsY. SRP is a ribonucleoprotein composed of Ffh and a 4.5S RNA molecule.

Its subcellular location is the cytoplasm. It catalyses the reaction GTP + H2O = GDP + phosphate + H(+). Its function is as follows. Involved in targeting and insertion of nascent membrane proteins into the cytoplasmic membrane. Binds to the hydrophobic signal sequence of the ribosome-nascent chain (RNC) as it emerges from the ribosomes. The SRP-RNC complex is then targeted to the cytoplasmic membrane where it interacts with the SRP receptor FtsY. Interaction with FtsY leads to the transfer of the RNC complex to the Sec translocase for insertion into the membrane, the hydrolysis of GTP by both Ffh and FtsY, and the dissociation of the SRP-FtsY complex into the individual components. This chain is Signal recognition particle protein, found in Rickettsia prowazekii (strain Madrid E).